The following is a 352-amino-acid chain: Rhodopsin (352 aa).

Over methionine 1–alanine 36 the chain is Extracellular. Asparagine 2 and asparagine 15 each carry an N-linked (GlcNAc...) asparagine glycan. A helical membrane pass occupies residues tyrosine 37–valine 61. Topologically, residues threonine 62–asparagine 73 are cytoplasmic. A helical membrane pass occupies residues leucine 74–tyrosine 96. At threonine 97 to cysteine 110 the chain is on the extracellular side. Cysteine 110 and cysteine 187 are joined by a disulfide. Residues asparagine 111–valine 133 form a helical membrane-spanning segment. Residues glutamate 134 to tryptophan 136 carry the 'Ionic lock' involved in activated form stabilization motif. Residues glutamate 134–histidine 152 lie on the Cytoplasmic side of the membrane. The chain crosses the membrane as a helical span at residues alanine 153 to valine 173. Topologically, residues glycine 174–serine 202 are extracellular. Residues phenylalanine 203–glycine 224 traverse the membrane as a helical segment. At arginine 225–arginine 252 the chain is on the cytoplasmic side. The chain crosses the membrane as a helical span at residues methionine 253 to tyrosine 274. At isoleucine 275–leucine 286 the chain is on the extracellular side. Residues phenylalanine 287–cysteine 308 traverse the membrane as a helical segment. N6-(retinylidene)lysine is present on lysine 296. Over methionine 309 to alanine 352 the chain is Cytoplasmic. S-palmitoyl cysteine attachment occurs at residues cysteine 322 and cysteine 323. Residues glutamate 331 to alanine 352 form a disordered region. Positions serine 342–alanine 352 are enriched in low complexity.

The protein belongs to the G-protein coupled receptor 1 family. Opsin subfamily. Post-translationally, phosphorylated on some or all of the serine and threonine residues present in the C-terminal region. Contains one covalently linked retinal chromophore.

The protein localises to the membrane. It is found in the cell projection. It localises to the cilium. The protein resides in the photoreceptor outer segment. Its function is as follows. Photoreceptor required for image-forming vision at low light intensity. While most salt water fish species use retinal as chromophore, most freshwater fish use 3-dehydroretinal, or a mixture of retinal and 3-dehydroretinal. Light-induced isomerization of 11-cis to all-trans retinal triggers a conformational change that activates signaling via G-proteins. Subsequent receptor phosphorylation mediates displacement of the bound G-protein alpha subunit by arrestin and terminates signaling. In Pomatoschistus minutus (Sand goby), this protein is Rhodopsin (rho).